The following is a 385-amino-acid chain: Serpin-Z10 (385 aa).

Residues 333 to 357 (GTEAAAVSVGVVSCTSFRRNPDFVA) form an RCL region.

Belongs to the serpin family.

Its function is as follows. Probable serine protease inhibitor. This is Serpin-Z10 from Arabidopsis thaliana (Mouse-ear cress).